Here is a 469-residue protein sequence, read N- to C-terminus: Deoxyribodipyrimidine photo-lyase (469 aa).

The region spanning 1–133 is the Photolyase/cryptochrome alpha/beta domain; that stretch reads MRLVWFRRDL…IWSAFDDKCV (133 aa). E107 serves as a coordination point for (6R)-5,10-methylene-5,6,7,8-tetrahydrofolate.

This sequence belongs to the DNA photolyase class-1 family. In terms of assembly, monomer. FAD is required as a cofactor. It depends on (6R)-5,10-methylene-5,6,7,8-tetrahydrofolate as a cofactor.

The enzyme catalyses cyclobutadipyrimidine (in DNA) = 2 pyrimidine residues (in DNA).. In terms of biological role, involved in repair of UV radiation-induced DNA damage. Catalyzes the light-dependent monomerization (300-600 nm) of cyclobutyl pyrimidine dimers (in cis-syn configuration), which are formed between adjacent bases on the same DNA strand upon exposure to ultraviolet radiation. This is Deoxyribodipyrimidine photo-lyase (phrA) from Vibrio cholerae serotype O1 (strain ATCC 39315 / El Tor Inaba N16961).